The chain runs to 311 residues: tRNA dimethylallyltransferase (311 aa).

Residue 9–16 (GPTAVGKT) participates in ATP binding. 11-16 (TAVGKT) provides a ligand contact to substrate. An interaction with substrate tRNA region spans residues 34–37 (DSMQ).

The protein belongs to the IPP transferase family. Monomer. Mg(2+) is required as a cofactor.

It catalyses the reaction adenosine(37) in tRNA + dimethylallyl diphosphate = N(6)-dimethylallyladenosine(37) in tRNA + diphosphate. In terms of biological role, catalyzes the transfer of a dimethylallyl group onto the adenine at position 37 in tRNAs that read codons beginning with uridine, leading to the formation of N6-(dimethylallyl)adenosine (i(6)A). This chain is tRNA dimethylallyltransferase, found in Clostridium botulinum (strain Hall / ATCC 3502 / NCTC 13319 / Type A).